The primary structure comprises 419 residues: Hyaluronidase-3 (419 aa).

Positions 1 to 16 are cleaved as a signal peptide; it reads MTMQLGLALVLGVAMC. 5 disulfide bridges follow: cysteine 42–cysteine 331, cysteine 205–cysteine 220, cysteine 356–cysteine 367, cysteine 361–cysteine 395, and cysteine 397–cysteine 406. Residue asparagine 69 is glycosylated (N-linked (GlcNAc...) asparagine). Glutamate 129 (proton donor) is an active-site residue. The N-linked (GlcNAc...) asparagine glycan is linked to asparagine 215. One can recognise an EGF-like domain in the interval 352 to 407; the sequence is AAMACSHQRCHGHGRCAWQDPGQLKVFLHLHPGGSPGAWESFSCRCYWGWAGPTCQ.

The protein belongs to the glycosyl hydrolase 56 family. N-glycosylated. Highly expressed in bladder, spleen and liver. Expressed at low levels in the kidney.

The protein localises to the secreted. Its subcellular location is the cell membrane. It localises to the cytoplasmic vesicle. The protein resides in the secretory vesicle. It is found in the acrosome. The protein localises to the endoplasmic reticulum. Its subcellular location is the early endosome. It carries out the reaction Random hydrolysis of (1-&gt;4)-linkages between N-acetyl-beta-D-glucosamine and D-glucuronate residues in hyaluronate.. Its function is as follows. Facilitates sperm penetration into the layer of cumulus cells surrounding the egg by digesting hyaluronic acid. Involved in induction of the acrosome reaction in the sperm. Involved in follicular atresia, the breakdown of immature ovarian follicles that are not selected to ovulate. Induces ovarian granulosa cell apoptosis, possibly via apoptotic signaling pathway involving CASP8 and CASP3 activation, and poly(ADP-ribose) polymerase (PARP) cleavage. Has no hyaluronidase activity in embryonic fibroblasts in vitro. Has no hyaluronidase activity in granulosa cells in vitro. The chain is Hyaluronidase-3 (HYAL3) from Sus scrofa (Pig).